A 434-amino-acid chain; its full sequence is NADH-quinone oxidoreductase subunit F 1 (434 aa).

NAD(+) is bound at residue 54-63; sequence GRGGAGFPTG. 166–213 contributes to the FMN binding site; the sequence is GAGAYICGEETALLESLEGKKGQPRLKPPFPANMGLYGCPTTVNNVES. Residues C345, C348, C351, and C391 each contribute to the [4Fe-4S] cluster site.

The protein belongs to the complex I 51 kDa subunit family. The cofactor is FMN. It depends on [4Fe-4S] cluster as a cofactor.

The enzyme catalyses a quinone + NADH + 5 H(+)(in) = a quinol + NAD(+) + 4 H(+)(out). Its function is as follows. NDH-1 shuttles electrons from NADH, via FMN and iron-sulfur (Fe-S) centers, to quinones in the respiratory chain. The immediate electron acceptor for the enzyme in this species is believed to be ubiquinone. Couples the redox reaction to proton translocation (for every two electrons transferred, four hydrogen ions are translocated across the cytoplasmic membrane), and thus conserves the redox energy in a proton gradient. The chain is NADH-quinone oxidoreductase subunit F 1 (nuoF1) from Rhizobium meliloti (strain 1021) (Ensifer meliloti).